The sequence spans 337 residues: Cysteine proteinase 3 (337 aa).

Residues 1–21 (MRLSITLIFTLIVLSISFISA) form the signal peptide. Positions 22–120 (GNVFSHKQYQ…GLRLNRPQFK (99 aa)) are cleaved as a propeptide — activation peptide. 3 disulfide bridges follow: cysteine 142-cysteine 185, cysteine 176-cysteine 219, and cysteine 277-cysteine 326. Residue cysteine 145 is part of the active site. Active-site residues include histidine 284 and asparagine 304.

This sequence belongs to the peptidase C1 family.

It localises to the lysosome. This is Cysteine proteinase 3 (cprC) from Dictyostelium discoideum (Social amoeba).